The sequence spans 326 residues: uncharacterized protein (326 aa).

Residue 127–134 (GATGSGKS) coordinates ATP.

Belongs to the GSP E family.

This is an uncharacterized protein from Escherichia coli (strain K12).